We begin with the raw amino-acid sequence, 794 residues long: DNA ligase (794 aa).

NAD(+) contacts are provided by residues 35-39, 84-85, and glutamate 126; these read DAEYD and SL. The active-site N6-AMP-lysine intermediate is the lysine 128. Residues arginine 149, glutamate 186, lysine 302, and lysine 326 each contribute to the NAD(+) site. Zn(2+) is bound by residues cysteine 420, cysteine 423, cysteine 450, and cysteine 456. The BRCT domain occupies 711–794; the sequence is VEGLPLAGQT…KLFDEHGVAR (84 aa).

This sequence belongs to the NAD-dependent DNA ligase family. LigA subfamily. It depends on Mg(2+) as a cofactor. Mn(2+) is required as a cofactor.

It catalyses the reaction NAD(+) + (deoxyribonucleotide)n-3'-hydroxyl + 5'-phospho-(deoxyribonucleotide)m = (deoxyribonucleotide)n+m + AMP + beta-nicotinamide D-nucleotide.. DNA ligase that catalyzes the formation of phosphodiester linkages between 5'-phosphoryl and 3'-hydroxyl groups in double-stranded DNA using NAD as a coenzyme and as the energy source for the reaction. It is essential for DNA replication and repair of damaged DNA. This chain is DNA ligase, found in Pseudomonas aeruginosa (strain LESB58).